A 42-amino-acid chain; its full sequence is uncharacterized protein (42 aa).

A helical membrane pass occupies residues Pro15 to Ile37.

It is found in the membrane. This is an uncharacterized protein from Dictyostelium discoideum (Social amoeba).